Reading from the N-terminus, the 128-residue chain is Large ribosomal subunit protein bL20c (128 aa).

This sequence belongs to the bacterial ribosomal protein bL20 family. Component of the chloroplast large ribosomal subunit (LSU). Mature 70S chloroplast ribosomes of higher plants consist of a small (30S) and a large (50S) subunit. The 30S small subunit contains 1 molecule of ribosomal RNA (16S rRNA) and 24 different proteins. The 50S large subunit contains 3 rRNA molecules (23S, 5S and 4.5S rRNA) and 33 different proteins.

Its subcellular location is the plastid. It localises to the chloroplast. In terms of biological role, component of the chloroplast ribosome (chloro-ribosome), a dedicated translation machinery responsible for the synthesis of chloroplast genome-encoded proteins, including proteins of the transcription and translation machinery and components of the photosynthetic apparatus. This chain is Large ribosomal subunit protein bL20c (rpl20), found in Spinacia oleracea (Spinach).